Here is a 126-residue protein sequence, read N- to C-terminus: Aspartate 1-decarboxylase (126 aa).

Catalysis depends on Ser-25, which acts as the Schiff-base intermediate with substrate; via pyruvic acid. Ser-25 carries the pyruvic acid (Ser) modification. Thr-57 is a substrate binding site. Tyr-58 acts as the Proton donor in catalysis. 73–75 (GAA) contacts substrate.

The protein belongs to the PanD family. In terms of assembly, heterooctamer of four alpha and four beta subunits. It depends on pyruvate as a cofactor. Is synthesized initially as an inactive proenzyme, which is activated by self-cleavage at a specific serine bond to produce a beta-subunit with a hydroxyl group at its C-terminus and an alpha-subunit with a pyruvoyl group at its N-terminus.

Its subcellular location is the cytoplasm. The catalysed reaction is L-aspartate + H(+) = beta-alanine + CO2. It participates in cofactor biosynthesis; (R)-pantothenate biosynthesis; beta-alanine from L-aspartate: step 1/1. In terms of biological role, catalyzes the pyruvoyl-dependent decarboxylation of aspartate to produce beta-alanine. The chain is Aspartate 1-decarboxylase from Psychromonas ingrahamii (strain DSM 17664 / CCUG 51855 / 37).